The following is a 178-amino-acid chain: MSFSFLFLGNLPLAEGFGINTNIFETNIINLAAVVAIVISFVGKNLSALLEDRRKTIVNNLQEASQRAAEAQERLNIAKNQLEVAKKKATEIREEGVFRATQEINNCVAQHEERLSKLEEFKQETVQFYQQKAFKQAYVYIISRIMSRVKERLNKGLDATYHVVVNNFYVSRFTEYNP.

Residues 23–43 (IFETNIINLAAVVAIVISFVG) form a helical membrane-spanning segment.

The protein belongs to the ATPase B chain family. In terms of assembly, F-type ATPases have 2 components, F(1) - the catalytic core - and F(0) - the membrane proton channel. F(1) has five subunits: alpha(3), beta(3), gamma(1), delta(1), epsilon(1). F(0) has four main subunits: a(1), b(1), b'(1) and c(10-14). The alpha and beta chains form an alternating ring which encloses part of the gamma chain. F(1) is attached to F(0) by a central stalk formed by the gamma and epsilon chains, while a peripheral stalk is formed by the delta, b and b' chains.

The protein localises to the plastid. It is found in the chloroplast thylakoid membrane. In terms of biological role, f(1)F(0) ATP synthase produces ATP from ADP in the presence of a proton or sodium gradient. F-type ATPases consist of two structural domains, F(1) containing the extramembraneous catalytic core and F(0) containing the membrane proton channel, linked together by a central stalk and a peripheral stalk. During catalysis, ATP synthesis in the catalytic domain of F(1) is coupled via a rotary mechanism of the central stalk subunits to proton translocation. Functionally, component of the F(0) channel, it forms part of the peripheral stalk, linking F(1) to F(0). The sequence is that of ATP synthase subunit b, chloroplastic from Tetradesmus obliquus (Green alga).